The chain runs to 311 residues: Aspartate carbamoyltransferase catalytic subunit (311 aa).

Carbamoyl phosphate-binding residues include Arg55 and Thr56. Lys85 is a binding site for L-aspartate. The carbamoyl phosphate site is built by Arg106, His135, and Gln138. 2 residues coordinate L-aspartate: Arg168 and Arg230. 2 residues coordinate carbamoyl phosphate: Leu268 and Pro269.

This sequence belongs to the aspartate/ornithine carbamoyltransferase superfamily. ATCase family. Heterododecamer (2C3:3R2) of six catalytic PyrB chains organized as two trimers (C3), and six regulatory PyrI chains organized as three dimers (R2).

It catalyses the reaction carbamoyl phosphate + L-aspartate = N-carbamoyl-L-aspartate + phosphate + H(+). It participates in pyrimidine metabolism; UMP biosynthesis via de novo pathway; (S)-dihydroorotate from bicarbonate: step 2/3. Functionally, catalyzes the condensation of carbamoyl phosphate and aspartate to form carbamoyl aspartate and inorganic phosphate, the committed step in the de novo pyrimidine nucleotide biosynthesis pathway. In Yersinia enterocolitica serotype O:8 / biotype 1B (strain NCTC 13174 / 8081), this protein is Aspartate carbamoyltransferase catalytic subunit.